A 360-amino-acid polypeptide reads, in one-letter code: 3-isopropylmalate dehydrogenase (360 aa).

76–89 (GPKWDTIERDIRPE) is a binding site for NAD(+). Substrate-binding residues include arginine 96, arginine 106, arginine 134, and aspartate 224. 3 residues coordinate Mg(2+): aspartate 224, aspartate 248, and aspartate 252. 282-294 (GSAPDIAGKGIAN) contributes to the NAD(+) binding site.

Belongs to the isocitrate and isopropylmalate dehydrogenases family. LeuB type 1 subfamily. In terms of assembly, homodimer. It depends on Mg(2+) as a cofactor. Mn(2+) is required as a cofactor.

The protein localises to the cytoplasm. It carries out the reaction (2R,3S)-3-isopropylmalate + NAD(+) = 4-methyl-2-oxopentanoate + CO2 + NADH. It participates in amino-acid biosynthesis; L-leucine biosynthesis; L-leucine from 3-methyl-2-oxobutanoate: step 3/4. In terms of biological role, catalyzes the oxidation of 3-carboxy-2-hydroxy-4-methylpentanoate (3-isopropylmalate) to 3-carboxy-4-methyl-2-oxopentanoate. The product decarboxylates to 4-methyl-2 oxopentanoate. In Pseudomonas savastanoi pv. phaseolicola (strain 1448A / Race 6) (Pseudomonas syringae pv. phaseolicola (strain 1448A / Race 6)), this protein is 3-isopropylmalate dehydrogenase.